A 245-amino-acid chain; its full sequence is MYPVDLHMHTVASTHAYSTLHDYIAEAKLKNIKLFAITDHGPDMADAPHYWHFMNMRVWPRLVDGVGILRGIEANIKNLDGDIDCTGPMLDAVDLLIAGFHEPVFPPQDKAANTQAMIATMAQGNVHIISHPGNPKYPVDIPAIAQAAAKYNVALELNNSSFAHSRKGSEANCRAIAAAVRDAGGWLALGSDSHIAYALGIFEHCERIIAEVNFPQERILNVSPRRLLDYLEQRGRPVIPELAEL.

Residues His-7, His-9, His-15, His-40, Glu-73, His-101, His-131, Asp-192, and His-194 each contribute to the Zn(2+) site.

It belongs to the PHP family. As to quaternary structure, homotrimer. Requires Zn(2+) as cofactor.

In Yersinia pestis bv. Antiqua (strain Angola), this protein is Probable phosphatase YpAngola_A2446.